The sequence spans 117 residues: Large ribosomal subunit protein uL18 (117 aa).

It belongs to the universal ribosomal protein uL18 family. As to quaternary structure, part of the 50S ribosomal subunit; part of the 5S rRNA/L5/L18/L25 subcomplex. Contacts the 5S and 23S rRNAs.

In terms of biological role, this is one of the proteins that bind and probably mediate the attachment of the 5S RNA into the large ribosomal subunit, where it forms part of the central protuberance. This Pseudoalteromonas atlantica (strain T6c / ATCC BAA-1087) protein is Large ribosomal subunit protein uL18.